The primary structure comprises 486 residues: Ribulose bisphosphate carboxylase large chain 1 (486 aa).

Asn125 and Thr175 together coordinate substrate. Lys177 acts as the Proton acceptor in catalysis. Residue Lys179 participates in substrate binding. Residues Lys203, Asp205, and Glu206 each coordinate Mg(2+). Lys203 carries the N6-carboxylysine modification. His295 serves as the catalytic Proton acceptor. Substrate-binding residues include Arg296, His328, and Ser380.

It belongs to the RuBisCO large chain family. Type I subfamily. In terms of assembly, heterohexadecamer of 8 large chains and 8 small chains. It depends on Mg(2+) as a cofactor.

The enzyme catalyses 2 (2R)-3-phosphoglycerate + 2 H(+) = D-ribulose 1,5-bisphosphate + CO2 + H2O. It carries out the reaction D-ribulose 1,5-bisphosphate + O2 = 2-phosphoglycolate + (2R)-3-phosphoglycerate + 2 H(+). In terms of biological role, ruBisCO catalyzes two reactions: the carboxylation of D-ribulose 1,5-bisphosphate, the primary event in carbon dioxide fixation, as well as the oxidative fragmentation of the pentose substrate. Both reactions occur simultaneously and in competition at the same active site. The chain is Ribulose bisphosphate carboxylase large chain 1 from Cereibacter sphaeroides (strain ATCC 17025 / ATH 2.4.3) (Rhodobacter sphaeroides).